The primary structure comprises 400 residues: Serine/threonine transporter SstT (400 aa).

A run of 10 helical transmembrane segments spans residues 11-31, 45-65, 81-101, 138-158, 175-195, 213-233, 242-264, 295-315, 327-347, and 354-374; these read IGLV…GWLA, FVGA…MAAI, IMYM…SFLF, AIAE…GFAL, AISQ…LGLV, ILMV…PLII, YPLV…SSAA, MAGA…TLGI, LVAT…LLLI, and FSIP…IGVI.

This sequence belongs to the dicarboxylate/amino acid:cation symporter (DAACS) (TC 2.A.23) family.

It localises to the cell inner membrane. It carries out the reaction L-serine(in) + Na(+)(in) = L-serine(out) + Na(+)(out). The enzyme catalyses L-threonine(in) + Na(+)(in) = L-threonine(out) + Na(+)(out). Its function is as follows. Involved in the import of serine and threonine into the cell, with the concomitant import of sodium (symport system). The polypeptide is Serine/threonine transporter SstT (Psychrobacter cryohalolentis (strain ATCC BAA-1226 / DSM 17306 / VKM B-2378 / K5)).